The primary structure comprises 235 residues: Photosystem I assembly protein Ycf4 (235 aa).

Transmembrane regions (helical) follow at residues Asn-21 to Tyr-43 and Gly-63 to Leu-85.

The protein belongs to the Ycf4 family.

Its subcellular location is the plastid. The protein resides in the chloroplast thylakoid membrane. Seems to be required for the assembly of the photosystem I complex. The protein is Photosystem I assembly protein Ycf4 of Amborella trichopoda.